A 377-amino-acid polypeptide reads, in one-letter code: Nitric oxide reductase FlRd-NAD(+) reductase (377 aa).

It belongs to the FAD-dependent oxidoreductase family. It depends on FAD as a cofactor.

Its subcellular location is the cytoplasm. It catalyses the reaction 2 reduced [nitric oxide reductase rubredoxin domain] + NAD(+) + H(+) = 2 oxidized [nitric oxide reductase rubredoxin domain] + NADH. It functions in the pathway nitrogen metabolism; nitric oxide reduction. One of at least two accessory proteins for anaerobic nitric oxide (NO) reductase. Reduces the rubredoxin moiety of NO reductase. The protein is Nitric oxide reductase FlRd-NAD(+) reductase of Escherichia coli O6:K15:H31 (strain 536 / UPEC).